We begin with the raw amino-acid sequence, 525 residues long: MNVQRKLASTQLKPVLLGVLLATSAWSQAAPPEQARQSAPPTLSSKQYSVTSASIEALKLDPPKLPDLSGYTHAAVEAKIRRKPGGRIAAAMLQQTALKDFTGGSGRLREWIVRQGGMPHAIFIEGGYVELGQLARQLPANQFAETTPGVYVARVPIVVAPGATLHIGKNVKELRLSEERGAFLVNDGKLFITDTKLVGWSEKNNAPSAYRGPESFWAFLVSWGGTETYISRRPVASLGYNTSKAYGVSITQYTPEMHKRLKRPRPTGWLIDSVFEDIYYGFYCYEADDVVLKGNTYRDNIIYGIDPHDRSERLVIAENHVYGTKKKHGIIVSREVNNSWIINNRTHDNKLSGIVLDRNSEHNLVAYNEVYQNHSDGITLYESSNNLIWGNRLINNARHGIRMRNSVNIRIYENLSVVNQLTGIYGHIKDLSSTDRDFKLDPFDTKVSMIVVGGQLTGNGSSPISVDSPLSLELYRVEMLAPTKSSGLTFTGILEDKQEEILDLLVRRQKAVLIDPVVDLAQAEL.

An N-terminal signal peptide occupies residues 1 to 29 (MNVQRKLASTQLKPVLLGVLLATSAWSQA). PbH1 repeat units follow at residues 287-309 (ADDV…DPHD), 311-334 (SERL…IVSR), 336-358 (VNNS…VLDR), 360-382 (SEHN…TLYE), and 383-405 (SSNN…RMRN). Catalysis depends on H308, which acts as the Proton acceptor.

The protein belongs to the D-mannuronate C5-epimerase family.

The protein localises to the periplasm. The enzyme catalyses [(1-&gt;4)-beta-D-mannuronosyl](n) = [alginate](n). The protein operates within glycan biosynthesis; alginate biosynthesis. Its activity is regulated as follows. Inhibited by zinc. Its function is as follows. Catalyzes the epimerization of beta-D-mannuronate to alpha-L-guluronate during the synthesis of the linear polysaccharide alginate. In addition, is part of a periplasmic protein complex that protects alginate from degradation by AlgL by channeling the newly formed alginate polymer through a scaffold that transfers the alginate polymer through the periplasmic space to the outer membrane secretin AlgE. This Azotobacter vinelandii protein is Mannuronan C5-epimerase AlgG.